The following is a 121-amino-acid chain: Large ribosomal subunit protein eL18 (121 aa).

This sequence belongs to the eukaryotic ribosomal protein eL18 family.

The protein is Large ribosomal subunit protein eL18 of Methanocaldococcus jannaschii (strain ATCC 43067 / DSM 2661 / JAL-1 / JCM 10045 / NBRC 100440) (Methanococcus jannaschii).